The chain runs to 390 residues: Aspergillopepsin-1 (390 aa).

An N-terminal signal peptide occupies residues 1–19 (MVNTSLLAALTAYAVAVSA). The propeptide at 20-67 (APTAPQVKGFSVNQVAVPKGVYRHPAAQLAKAYGKYHATVPTQVAAAA) is activation peptide. Thr70 carries an O-linked (Man...) threonine glycan. One can recognise a Peptidase A1 domain in the interval 84 to 387 (YITQVTVGDD…DASGPRLGFA (304 aa)). Catalysis depends on residues Asp100 and Asp281.

Belongs to the peptidase A1 family.

Its subcellular location is the secreted. The enzyme catalyses Hydrolysis of proteins with broad specificity. Generally favors hydrophobic residues in P1 and P1', but also accepts Lys in P1, which leads to activation of trypsinogen. Does not clot milk.. Inhibited by the microbial peptide pepstatin. In terms of biological role, secreted aspartic endopeptidase that allows assimilation of proteinaceous substrates. The scissile peptide bond is attacked by a nucleophilic water molecule activated by two aspartic residues in the active site. Shows a broad primary substrate specificity. Favors hydrophobic residues at the P1 and P1' positions, but also accepts a lysine residue in the P1 position, leading to the activation of trypsinogen and chymotrypsinogen A. This chain is Aspergillopepsin-1 (pepA), found in Aspergillus oryzae (Yellow koji mold).